We begin with the raw amino-acid sequence, 335 residues long: Acetyl-coenzyme A carboxylase carboxyl transferase subunit alpha (335 aa).

One can recognise a CoA carboxyltransferase C-terminal domain in the interval 48–308 (TLEKKVDALR…KGMLIEELKA (261 aa)).

This sequence belongs to the AccA family. Acetyl-CoA carboxylase is a heterohexamer composed of biotin carboxyl carrier protein (AccB), biotin carboxylase (AccC) and two subunits each of ACCase subunit alpha (AccA) and ACCase subunit beta (AccD).

It localises to the cytoplasm. It catalyses the reaction N(6)-carboxybiotinyl-L-lysyl-[protein] + acetyl-CoA = N(6)-biotinyl-L-lysyl-[protein] + malonyl-CoA. The protein operates within lipid metabolism; malonyl-CoA biosynthesis; malonyl-CoA from acetyl-CoA: step 1/1. Functionally, component of the acetyl coenzyme A carboxylase (ACC) complex. First, biotin carboxylase catalyzes the carboxylation of biotin on its carrier protein (BCCP) and then the CO(2) group is transferred by the carboxyltransferase to acetyl-CoA to form malonyl-CoA. The protein is Acetyl-coenzyme A carboxylase carboxyl transferase subunit alpha of Chlorobium luteolum (strain DSM 273 / BCRC 81028 / 2530) (Pelodictyon luteolum).